The chain runs to 121 residues: Flagellar protein FliT (121 aa).

The interval 1–50 (MNNAPHLYFAWQQLVEKSQLMLRLATEEQWDELIASEMAYVNAVQEIAHL) is required for homodimerization. The interval 60–98 (MQEQLRPMLHLILDNESKVKQLLQIRMDELAKLVGQSSV) is fliD binding.

The protein belongs to the FliT family. Homodimer. Interacts with FliD and FlhC.

It localises to the cytoplasm. Its subcellular location is the cytosol. Functionally, dual-function protein that regulates the transcription of class 2 flagellar operons and that also acts as an export chaperone for the filament-capping protein FliD. As a transcriptional regulator, acts as an anti-FlhDC factor; it directly binds FlhC, thus inhibiting the binding of the FlhC/FlhD complex to class 2 promoters, resulting in decreased expression of class 2 flagellar operons. As a chaperone, effects FliD transition to the membrane by preventing its premature polymerization, and by directing it to the export apparatus. This chain is Flagellar protein FliT, found in Shigella flexneri serotype 5b (strain 8401).